A 73-amino-acid polypeptide reads, in one-letter code: MKNYSFYQFVMTVRGRHDDKGRLAEEIFDDLAFPKHDDDFNILSDYIETHGDFTLPMSVFDDLYEEYTEWLKF.

The protein belongs to the UPF0346 family.

In Staphylococcus aureus (strain MSSA476), this protein is UPF0346 protein SAS1364.